A 305-amino-acid chain; its full sequence is Glycerol-3-phosphate dehydrogenase [NAD(P)+] (305 aa).

Positions 11, 31, and 79 each coordinate NADPH. Sn-glycerol 3-phosphate is bound by residues K79 and G107. A111 contributes to the NADPH binding site. Residues K162, D215, S225, R226, and N227 each coordinate sn-glycerol 3-phosphate. Residue K162 is the Proton acceptor of the active site. Residue R226 participates in NADPH binding. Position 252 (E252) interacts with NADPH.

Belongs to the NAD-dependent glycerol-3-phosphate dehydrogenase family.

The protein resides in the cytoplasm. It carries out the reaction sn-glycerol 3-phosphate + NAD(+) = dihydroxyacetone phosphate + NADH + H(+). It catalyses the reaction sn-glycerol 3-phosphate + NADP(+) = dihydroxyacetone phosphate + NADPH + H(+). Its pathway is membrane lipid metabolism; glycerophospholipid metabolism. In terms of biological role, catalyzes the reduction of the glycolytic intermediate dihydroxyacetone phosphate (DHAP) to sn-glycerol 3-phosphate (G3P), the key precursor for phospholipid synthesis. The chain is Glycerol-3-phosphate dehydrogenase [NAD(P)+] from Gloeobacter violaceus (strain ATCC 29082 / PCC 7421).